Reading from the N-terminus, the 268-residue chain is Tryptophan synthase alpha chain (268 aa).

Active-site proton acceptor residues include glutamate 49 and aspartate 60.

This sequence belongs to the TrpA family. As to quaternary structure, tetramer of two alpha and two beta chains.

It carries out the reaction (1S,2R)-1-C-(indol-3-yl)glycerol 3-phosphate + L-serine = D-glyceraldehyde 3-phosphate + L-tryptophan + H2O. Its pathway is amino-acid biosynthesis; L-tryptophan biosynthesis; L-tryptophan from chorismate: step 5/5. Functionally, the alpha subunit is responsible for the aldol cleavage of indoleglycerol phosphate to indole and glyceraldehyde 3-phosphate. The polypeptide is Tryptophan synthase alpha chain (Shigella flexneri serotype 5b (strain 8401)).